We begin with the raw amino-acid sequence, 162 residues long: NADH-quinone oxidoreductase subunit I (162 aa).

4Fe-4S ferredoxin-type domains are found at residues 52 to 82 (LRRY…IEAG) and 93 to 122 (TRYD…EGPN). [4Fe-4S] cluster-binding residues include C62, C65, C68, C72, C102, C105, C108, and C112.

This sequence belongs to the complex I 23 kDa subunit family. In terms of assembly, NDH-1 is composed of 14 different subunits. Subunits NuoA, H, J, K, L, M, N constitute the membrane sector of the complex. [4Fe-4S] cluster serves as cofactor.

The protein localises to the cell inner membrane. It catalyses the reaction a quinone + NADH + 5 H(+)(in) = a quinol + NAD(+) + 4 H(+)(out). In terms of biological role, NDH-1 shuttles electrons from NADH, via FMN and iron-sulfur (Fe-S) centers, to quinones in the respiratory chain. The immediate electron acceptor for the enzyme in this species is believed to be ubiquinone. Couples the redox reaction to proton translocation (for every two electrons transferred, four hydrogen ions are translocated across the cytoplasmic membrane), and thus conserves the redox energy in a proton gradient. The chain is NADH-quinone oxidoreductase subunit I from Azorhizobium caulinodans (strain ATCC 43989 / DSM 5975 / JCM 20966 / LMG 6465 / NBRC 14845 / NCIMB 13405 / ORS 571).